Reading from the N-terminus, the 294-residue chain is 33 kDa chaperonin (294 aa).

Intrachain disulfides connect C239–C241 and C272–C275.

It belongs to the HSP33 family. Post-translationally, under oxidizing conditions two disulfide bonds are formed involving the reactive cysteines. Under reducing conditions zinc is bound to the reactive cysteines and the protein is inactive.

It localises to the cytoplasm. In terms of biological role, redox regulated molecular chaperone. Protects both thermally unfolding and oxidatively damaged proteins from irreversible aggregation. Plays an important role in the bacterial defense system toward oxidative stress. This Listeria innocua serovar 6a (strain ATCC BAA-680 / CLIP 11262) protein is 33 kDa chaperonin.